The following is a 105-amino-acid chain: Iron-sulfur cluster assembly protein CyaY (105 aa).

It belongs to the frataxin family.

Its function is as follows. Involved in iron-sulfur (Fe-S) cluster assembly. May act as a regulator of Fe-S biogenesis. This is Iron-sulfur cluster assembly protein CyaY from Psychromonas ingrahamii (strain DSM 17664 / CCUG 51855 / 37).